The sequence spans 447 residues: ATP-dependent protease ATPase subunit HslU (447 aa).

ATP-binding positions include Ile17, 59-64 (GVGKTE), Asp256, Glu321, and Arg393.

The protein belongs to the ClpX chaperone family. HslU subfamily. As to quaternary structure, a double ring-shaped homohexamer of HslV is capped on each side by a ring-shaped HslU homohexamer. The assembly of the HslU/HslV complex is dependent on binding of ATP.

It is found in the cytoplasm. Its function is as follows. ATPase subunit of a proteasome-like degradation complex; this subunit has chaperone activity. The binding of ATP and its subsequent hydrolysis by HslU are essential for unfolding of protein substrates subsequently hydrolyzed by HslV. HslU recognizes the N-terminal part of its protein substrates and unfolds these before they are guided to HslV for hydrolysis. This is ATP-dependent protease ATPase subunit HslU from Pseudomonas putida (strain GB-1).